Reading from the N-terminus, the 115-residue chain is NADH-ubiquinone oxidoreductase chain 3 (115 aa).

Helical transmembrane passes span L3–W23, F55–L75, and L86–W106.

It belongs to the complex I subunit 3 family. Core subunit of respiratory chain NADH dehydrogenase (Complex I) which is composed of 45 different subunits. Interacts with TMEM186. Interacts with TMEM242.

The protein localises to the mitochondrion inner membrane. The catalysed reaction is a ubiquinone + NADH + 5 H(+)(in) = a ubiquinol + NAD(+) + 4 H(+)(out). Its function is as follows. Core subunit of the mitochondrial membrane respiratory chain NADH dehydrogenase (Complex I) which catalyzes electron transfer from NADH through the respiratory chain, using ubiquinone as an electron acceptor. Essential for the catalytic activity of complex I. This is NADH-ubiquinone oxidoreductase chain 3 from Mammuthus primigenius (Siberian woolly mammoth).